The primary structure comprises 447 residues: ATP-dependent protease ATPase subunit HslU (447 aa).

ATP contacts are provided by residues Ile-17 and 59 to 64 (GVGKTE). Residues 136–160 (PPARGGFQGEPTAEEKPTEKKESAT) are disordered. Positions 148–159 (AEEKPTEKKESA) are enriched in basic and acidic residues. ATP-binding residues include Asp-260, Glu-325, and Arg-397.

It belongs to the ClpX chaperone family. HslU subfamily. As to quaternary structure, a double ring-shaped homohexamer of HslV is capped on each side by a ring-shaped HslU homohexamer. The assembly of the HslU/HslV complex is dependent on binding of ATP.

Its subcellular location is the cytoplasm. Functionally, ATPase subunit of a proteasome-like degradation complex; this subunit has chaperone activity. The binding of ATP and its subsequent hydrolysis by HslU are essential for unfolding of protein substrates subsequently hydrolyzed by HslV. HslU recognizes the N-terminal part of its protein substrates and unfolds these before they are guided to HslV for hydrolysis. This Coxiella burnetii (strain Dugway 5J108-111) protein is ATP-dependent protease ATPase subunit HslU.